Reading from the N-terminus, the 1080-residue chain is ATP-dependent helicase/deoxyribonuclease subunit B (1080 aa).

It belongs to the helicase family. AddB/RexB type 2 subfamily. As to quaternary structure, heterodimer of AddA and RexB. The cofactor is Mg(2+).

Functionally, the heterodimer acts as both an ATP-dependent DNA helicase and an ATP-dependent, dual-direction single-stranded exonuclease. Recognizes the chi site generating a DNA molecule suitable for the initiation of homologous recombination. This subunit has 5' -&gt; 3' nuclease activity but not helicase activity. This chain is ATP-dependent helicase/deoxyribonuclease subunit B, found in Streptococcus mutans serotype c (strain ATCC 700610 / UA159).